The sequence spans 234 residues: 1-(5-phosphoribosyl)-5-[(5-phosphoribosylamino)methylideneamino] imidazole-4-carboxamide isomerase (234 aa).

Catalysis depends on Asp9, which acts as the Proton acceptor. Asp131 serves as the catalytic Proton donor.

The protein belongs to the HisA/HisF family.

The protein localises to the cytoplasm. The catalysed reaction is 1-(5-phospho-beta-D-ribosyl)-5-[(5-phospho-beta-D-ribosylamino)methylideneamino]imidazole-4-carboxamide = 5-[(5-phospho-1-deoxy-D-ribulos-1-ylimino)methylamino]-1-(5-phospho-beta-D-ribosyl)imidazole-4-carboxamide. Its pathway is amino-acid biosynthesis; L-histidine biosynthesis; L-histidine from 5-phospho-alpha-D-ribose 1-diphosphate: step 4/9. This Staphylococcus aureus (strain JH1) protein is 1-(5-phosphoribosyl)-5-[(5-phosphoribosylamino)methylideneamino] imidazole-4-carboxamide isomerase.